The primary structure comprises 544 residues: MPSKSSVSGNSVEERIRSELGLSKEVTLIRRNAPAAVLYQDALKEKKTVISSAGALIAYSGEKTGRSPKDKRIVEEETSRDNVWWGPVNKPCSERTWAINRERAADYLRTRETLYVVDAFAGWDPKYRIKVRVVCARAYHALFMTNMLIRPTEEELANFGEPDFTVWNAGQFPANARTQDMTSKTTIEINFKAMEMVILGTEYAGEMKKGIFTVMFYLMPVHHNVLTLHSSCNQGIKNGDVTLFFGLSGTGKTTLSADPHRLLIGDDEHCWSDEGVFNIEGGCYAKCINLSREKEPEIFDAIRFGSVLENVIYDSESHEVDYDDSSITENTRCAYPIDFIPSAKIPCLAPAHPKNIILLTCDASGVLPPVSKLTPEQVMYHFISGYTSKMAGTEQGVTEPEPTFSSCFGQPFLSLHPMRYATMLAEKMHEHSANAWLINTGWTGSSYVSGGKRCALKYTRAILDAIHDGSLAKAEFESLPIFNLQVPKAVEGVPSELLNPARNWSEGEAKYQSAVSKLAGLFVENFKTYQDKATSDVLAAGPQL.

246-253 serves as a coordination point for ATP; it reads GLSGTGKT.

This sequence belongs to the phosphoenolpyruvate carboxykinase (ATP) family.

The catalysed reaction is oxaloacetate + ATP = phosphoenolpyruvate + ADP + CO2. It functions in the pathway carbohydrate biosynthesis; gluconeogenesis. The polypeptide is Phosphoenolpyruvate carboxykinase (ATP) (PCK1) (Candida glabrata (strain ATCC 2001 / BCRC 20586 / JCM 3761 / NBRC 0622 / NRRL Y-65 / CBS 138) (Yeast)).